Reading from the N-terminus, the 101-residue chain is Large ribosomal subunit protein eL30 (101 aa).

It belongs to the eukaryotic ribosomal protein eL30 family.

The protein is Large ribosomal subunit protein eL30 of Pyrobaculum calidifontis (strain DSM 21063 / JCM 11548 / VA1).